A 188-amino-acid chain; its full sequence is Elongation factor P-like protein (188 aa).

It belongs to the elongation factor P family.

The polypeptide is Elongation factor P-like protein (Aliivibrio fischeri (strain ATCC 700601 / ES114) (Vibrio fischeri)).